A 141-amino-acid polypeptide reads, in one-letter code: Large ribosomal subunit protein uL16 (141 aa).

It belongs to the universal ribosomal protein uL16 family. In terms of assembly, part of the 50S ribosomal subunit.

In terms of biological role, binds 23S rRNA and is also seen to make contacts with the A and possibly P site tRNAs. In Deinococcus geothermalis (strain DSM 11300 / CIP 105573 / AG-3a), this protein is Large ribosomal subunit protein uL16.